The sequence spans 193 residues: Sorting nexin-22 (193 aa).

The disordered stretch occupies residues 1–21 (MLEVHIPSVGPEAEGPRQSPE). A PX domain is found at 1–118 (MLEVHIPSVG…HFPTDPKASN (118 aa)). The a 1,2-diacyl-sn-glycero-3-phospho-(1D-myo-inositol-3-phosphate) site is built by Arg-43, Ser-45, Lys-66, and Arg-79.

Belongs to the sorting nexin family. As to quaternary structure, (Microbial infection) Interacts with P.falciparum (strain 3D7) CK1. In terms of tissue distribution, expressed in erythrocytes (at protein level).

Its subcellular location is the cytoplasmic vesicle membrane. Its function is as follows. May be involved in several stages of intracellular trafficking. Interacts with membranes containing phosphatidylinositol 3-phosphate (PtdIns(3P)). This Homo sapiens (Human) protein is Sorting nexin-22 (SNX22).